Here is a 195-residue protein sequence, read N- to C-terminus: Neurensin-1 (195 aa).

A run of 2 helical transmembrane segments spans residues 66–86 (LISG…GFLV) and 120–140 (AVLF…SVFV).

The protein belongs to the VMP family. Expressed in brain. Not detectable in other tissues tested.

The protein localises to the membrane. The protein resides in the cell projection. Its subcellular location is the neuron projection. Functionally, may play an important role in neural organelle transport, and in transduction of nerve signals or in nerve growth. May play a role in neurite extension. May play a role in memory consolidation. The protein is Neurensin-1 of Homo sapiens (Human).